We begin with the raw amino-acid sequence, 430 residues long: WD repeat-containing protein jip5 (430 aa).

6 WD repeats span residues Pro9–Glu48, Arg72–Lys111, Thr117–Ser158, Asp215–Glu262, Ala272–Glu318, and Asp323–Glu360. A compositionally biased stretch (acidic residues) spans Glu356–Asp374. Positions Glu356–Glu430 are disordered. A compositionally biased stretch (basic and acidic residues) spans His382–Ser397. Residues Arg405–Lys416 are compositionally biased toward basic residues.

It belongs to the WD repeat WDR55 family.

It is found in the nucleus. The protein localises to the nucleolus. The protein is WD repeat-containing protein jip5 (jip5) of Botryotinia fuckeliana (strain B05.10) (Noble rot fungus).